An 87-amino-acid polypeptide reads, in one-letter code: Small ribosomal subunit protein bS20 (87 aa).

A compositionally biased stretch (basic residues) spans 1–11; the sequence is MANIKSAKKRA. Residues 1 to 27 are disordered; sequence MANIKSAKKRAVQSEKRRQHNASQRSM.

This sequence belongs to the bacterial ribosomal protein bS20 family.

In terms of biological role, binds directly to 16S ribosomal RNA. The polypeptide is Small ribosomal subunit protein bS20 (Haemophilus influenzae (strain PittEE)).